Reading from the N-terminus, the 300-residue chain is Ribosomal RNA small subunit methyltransferase H (300 aa).

Residues 33-35, Asp52, Phe86, Asp97, and Gln104 contribute to the S-adenosyl-L-methionine site; that span reads AGH.

It belongs to the methyltransferase superfamily. RsmH family.

The protein resides in the cytoplasm. The catalysed reaction is cytidine(1402) in 16S rRNA + S-adenosyl-L-methionine = N(4)-methylcytidine(1402) in 16S rRNA + S-adenosyl-L-homocysteine + H(+). In terms of biological role, specifically methylates the N4 position of cytidine in position 1402 (C1402) of 16S rRNA. This chain is Ribosomal RNA small subunit methyltransferase H, found in Aliarcobacter butzleri (strain RM4018) (Arcobacter butzleri).